The sequence spans 598 residues: Aspartate--tRNA(Asp/Asn) ligase (598 aa).

Residue glutamate 170 participates in L-aspartate binding. The aspartate stretch occupies residues 194–197 (QLFK). Residue arginine 216 participates in L-aspartate binding. Residues 216–218 (RDE) and glutamine 225 contribute to the ATP site. Histidine 448 is a binding site for L-aspartate. Glutamate 482 contacts ATP. Position 489 (arginine 489) interacts with L-aspartate. 534–537 (GWDR) lines the ATP pocket. The segment at 558–598 (GGGVDPLTDAPAPITPQQRKESGIDAKPREDKPKEDAKSKA) is disordered. Positions 575–598 (QRKESGIDAKPREDKPKEDAKSKA) are enriched in basic and acidic residues.

The protein belongs to the class-II aminoacyl-tRNA synthetase family. Type 1 subfamily. As to quaternary structure, homodimer.

It is found in the cytoplasm. The enzyme catalyses tRNA(Asx) + L-aspartate + ATP = L-aspartyl-tRNA(Asx) + AMP + diphosphate. Functionally, aspartyl-tRNA synthetase with relaxed tRNA specificity since it is able to aspartylate not only its cognate tRNA(Asp) but also tRNA(Asn). Reaction proceeds in two steps: L-aspartate is first activated by ATP to form Asp-AMP and then transferred to the acceptor end of tRNA(Asp/Asn). In Mycolicibacterium smegmatis (strain ATCC 700084 / mc(2)155) (Mycobacterium smegmatis), this protein is Aspartate--tRNA(Asp/Asn) ligase.